The following is a 106-amino-acid chain: MSRNFEWASPGSDLLEKERTKVKPPAMYNVVLHNDDYTPMDFVIEILERFFSLDIEKATEVMLKVHYEGKAICGTYSAEIAETKVAQVTMYSKENEHPLLCTMEQV.

Belongs to the ClpS family. As to quaternary structure, binds to the N-terminal domain of the chaperone ClpA.

Functionally, involved in the modulation of the specificity of the ClpAP-mediated ATP-dependent protein degradation. This chain is ATP-dependent Clp protease adapter protein ClpS, found in Vibrio atlanticus (strain LGP32) (Vibrio splendidus (strain Mel32)).